We begin with the raw amino-acid sequence, 384 residues long: Guanine nucleotide-binding protein alpha-1 subunit (384 aa).

Glycine 2 is lipidated: N-myristoyl glycine. Cysteine 5 carries the S-palmitoyl cysteine lipid modification. The 347-residue stretch at 38–384 (HIQKLLLLGA…RRNLFEAGLL (347 aa)) folds into the G-alpha domain. The tract at residues 41–54 (KLLLLGAGESGKST) is G1 motif. GTP is bound by residues glutamate 49, serine 50, glycine 51, lysine 52, serine 53, threonine 54, leucine 188, tyrosine 189, threonine 194, glycine 222, asparagine 288, lysine 289, aspartate 291, and alanine 356. Serine 53 provides a ligand contact to Mg(2+). The tract at residues 186–194 (DVLYARVRT) is G2 motif. Threonine 194 lines the Mg(2+) pocket. The G3 motif stretch occupies residues 215–224 (YRLFDVGGQR). The interval 284 to 291 (MLFLNKFD) is G4 motif. The interval 354-359 (TTALDQ) is G5 motif.

This sequence belongs to the G-alpha family. In terms of assembly, g proteins are composed of 3 units; alpha, beta and gamma. The alpha chain contains the guanine nucleotide binding site. Requires Mg(2+) as cofactor.

Guanine nucleotide-binding proteins (G proteins) are involved as modulators or transducers in various transmembrane signaling systems. This is Guanine nucleotide-binding protein alpha-1 subunit (GPA1) from Lupinus luteus (European yellow lupine).